The chain runs to 183 residues: ATP synthase subunit delta (183 aa).

This sequence belongs to the ATPase delta chain family. In terms of assembly, F-type ATPases have 2 components, F(1) - the catalytic core - and F(0) - the membrane proton channel. F(1) has five subunits: alpha(3), beta(3), gamma(1), delta(1), epsilon(1). CF(0) has four main subunits: a(1), b(1), b'(1) and c(10-14). The alpha and beta chains form an alternating ring which encloses part of the gamma chain. F(1) is attached to F(0) by a central stalk formed by the gamma and epsilon chains, while a peripheral stalk is formed by the delta, b and b' chains.

It is found in the cellular thylakoid membrane. F(1)F(0) ATP synthase produces ATP from ADP in the presence of a proton or sodium gradient. F-type ATPases consist of two structural domains, F(1) containing the extramembraneous catalytic core and F(0) containing the membrane proton channel, linked together by a central stalk and a peripheral stalk. During catalysis, ATP synthesis in the catalytic domain of F(1) is coupled via a rotary mechanism of the central stalk subunits to proton translocation. Functionally, this protein is part of the stalk that links CF(0) to CF(1). It either transmits conformational changes from CF(0) to CF(1) or is implicated in proton conduction. In Prochlorococcus marinus (strain SARG / CCMP1375 / SS120), this protein is ATP synthase subunit delta.